The chain runs to 578 residues: Zinc finger protein with KRAB and SCAN domains 8 (578 aa).

The interval 1–20 (MAEESRKPSAPSPPDQTPEE) is disordered. Ser12 is subject to Phosphoserine. Lys26 is covalently cross-linked (Glycyl lysine isopeptide (Lys-Gly) (interchain with G-Cter in SUMO2)). Positions 51 to 133 (RLRFRQLRYQ…TLLEDLERQI (83 aa)) constitute an SCAN box domain. The disordered stretch occupies residues 158-205 (ASAPEPPNTQLQSEATQHKSPVPQESQERAMSTSQSPTRSQKGSSGDQ). Polar residues predominate over residues 165 to 205 (NTQLQSEATQHKSPVPQESQERAMSTSQSPTRSQKGSSGDQ). Glycyl lysine isopeptide (Lys-Gly) (interchain with G-Cter in SUMO2) cross-links involve residues Lys176 and Lys199. Ser201 carries the phosphoserine modification. A KRAB domain is found at 220–316 (EKIEDMAVSL…GRLERQRGNP (97 aa)). Residues Lys221, Lys272, and Lys288 each participate in a glycyl lysine isopeptide (Lys-Gly) (interchain with G-Cter in SUMO2) cross-link. 2 consecutive C2H2-type zinc fingers follow at residues 322-344 (HKCD…WRIH) and 350-372 (YQCN…QDIH). Glycyl lysine isopeptide (Lys-Gly) (interchain with G-Cter in SUMO2) cross-links involve residues Lys374 and Lys376. 7 consecutive C2H2-type zinc fingers follow at residues 378–400 (YHCK…QRIH), 406–428 (YQCN…QRIH), 434–456 (YECN…QRIH), 462–484 (YECD…QRSH), 490–512 (YKCN…QRIH), 518–540 (YKCK…LRIH), and 546–568 (YQCN…QRIH). Glycyl lysine isopeptide (Lys-Gly) (interchain with G-Cter in SUMO2) cross-links involve residues Lys413 and Lys441. A Glycyl lysine isopeptide (Lys-Gly) (interchain with G-Cter in SUMO2) cross-link involves residue Lys502. A Glycyl lysine isopeptide (Lys-Gly) (interchain with G-Cter in SUMO2) cross-link involves residue Lys572.

This sequence belongs to the krueppel C2H2-type zinc-finger protein family.

It is found in the nucleus. Functionally, may be involved in transcriptional regulation. This is Zinc finger protein with KRAB and SCAN domains 8 (ZKSCAN8) from Homo sapiens (Human).